A 517-amino-acid polypeptide reads, in one-letter code: MTPADLRQSPPLPPGGPTARTVLQLQGVGKRFPGVVALDGIDLDLRAGEVHAVCGENGAGKSTLMKIISGQYRADDGVVLYDGAPVQFSSATDAQAAGIAIIHQELNLVPHLSVAENIYLAREPKRGPFVDYRALNRAAQLCLQRIGLNVSPTTLVGALSIAQQQMVEIAKALSLDARVLIMDEPTSSLTESETVQLFRIIKELRSEGVAILYISHRLDEMAEIVDRVTVLRDGRHIATSDFASTSVNEIVARMVGRPLDDAYPPRRSTPTDQVLLKVRDLQRTGTFGPVSFELRKGEILGFAGLMGAGRTEVARAIFGAERPDAGSILLGDTPVEINSPREAIRHGIAYLSEDRKKDGLALAMPVAANITLANVAAISSRGFLRFADETAIAERYVRELGIRTPTVAQIARNLSGGNQQKIVISKWLYRGSRILFFDEPTRGIDVGAKYAIYGLMDRLAADGVGVGVVLISSELPELLGMTDRIAVFHEGRITAVLETGKTNQEEILHHASGRSHA.

ABC transporter domains are found at residues 23 to 258 (LQLQ…VGRP) and 269 to 515 (TPTD…SGRS). ATP is bound at residue 55 to 62 (GENGAGKS).

This sequence belongs to the ABC transporter superfamily. Carbohydrate importer 2 (CUT2) (TC 3.A.1.2) family.

The protein localises to the cell inner membrane. It catalyses the reaction D-ribose(out) + ATP + H2O = D-ribose(in) + ADP + phosphate + H(+). It carries out the reaction D-galactose(out) + ATP + H2O = D-galactose(in) + ADP + phosphate + H(+). In terms of biological role, part of an ABC transporter complex involved in carbohydrate import. Could be involved in ribose, galactose and/or methyl galactoside import. Responsible for energy coupling to the transport system. The polypeptide is Putative ribose/galactose/methyl galactoside import ATP-binding protein 1 (Burkholderia ambifaria (strain ATCC BAA-244 / DSM 16087 / CCUG 44356 / LMG 19182 / AMMD) (Burkholderia cepacia (strain AMMD))).